Consider the following 780-residue polypeptide: Lon protease (780 aa).

The Lon N-terminal domain occupies 11–204 (IPVLPLRDVV…RLMAIMESEI (194 aa)). 356 to 363 (GPPGVGKT) contributes to the ATP binding site. The Lon proteolytic domain maps to 592 to 773 (KNQIGQVIGL…KEVLNLSLEN (182 aa)). Catalysis depends on residues Ser-679 and Lys-722.

Belongs to the peptidase S16 family. As to quaternary structure, homohexamer. Organized in a ring with a central cavity.

It is found in the cytoplasm. The enzyme catalyses Hydrolysis of proteins in presence of ATP.. In terms of biological role, ATP-dependent serine protease that mediates the selective degradation of mutant and abnormal proteins as well as certain short-lived regulatory proteins. Required for cellular homeostasis and for survival from DNA damage and developmental changes induced by stress. Degrades polypeptides processively to yield small peptide fragments that are 5 to 10 amino acids long. Binds to DNA in a double-stranded, site-specific manner. The protein is Lon protease of Buchnera aphidicola subsp. Baizongia pistaciae (strain Bp).